The chain runs to 464 residues: Protein ABHD18 (464 aa).

An N-terminal signal peptide occupies residues 1-24 (MGVSKLDILYRRLLLTKLFIRGWG). A glycan (N-linked (GlcNAc...) asparagine) is linked at N341.

It belongs to the AB hydrolase superfamily.

Its subcellular location is the secreted. The sequence is that of Protein ABHD18 from Mus musculus (Mouse).